Consider the following 290-residue polypeptide: Arylamine N-acetyltransferase 1 (290 aa).

Methionine 1 carries the N-acetylmethionine modification. Residue cysteine 68 is the Acyl-thioester intermediate of the active site. Threonine 103 and glycine 104 together coordinate CoA. 106 to 107 contacts substrate; that stretch reads IH. Catalysis depends on residues histidine 107 and aspartate 122. The CoA site is built by tyrosine 208 and serine 214.

The protein belongs to the arylamine N-acetyltransferase family.

The protein localises to the cytoplasm. The catalysed reaction is an arylamine + acetyl-CoA = an N-acetylarylamine + CoA. The sequence is that of Arylamine N-acetyltransferase 1 (NAT1) from Oryctolagus cuniculus (Rabbit).